A 195-amino-acid chain; its full sequence is Probable GTP-binding protein EngB (195 aa).

The EngB-type G domain maps to 24-195 (ELPEIALAGR…EAWDAILEKL (172 aa)). Residues 32-39 (GRSNVGKS), 59-63 (GKTQL), 77-80 (DVPG), 144-147 (TKAD), and 176-178 (FSS) contribute to the GTP site. Mg(2+)-binding residues include serine 39 and threonine 61.

It belongs to the TRAFAC class TrmE-Era-EngA-EngB-Septin-like GTPase superfamily. EngB GTPase family. Mg(2+) is required as a cofactor.

Functionally, necessary for normal cell division and for the maintenance of normal septation. This is Probable GTP-binding protein EngB from Streptococcus pneumoniae (strain ATCC 700669 / Spain 23F-1).